Consider the following 211-residue polypeptide: Large ribosomal subunit protein uL3 (211 aa).

The segment at 126-147 is disordered; the sequence is HGQSRGPMAHGSRYHRRPGSMG.

The protein belongs to the universal ribosomal protein uL3 family. In terms of assembly, part of the 50S ribosomal subunit. Forms a cluster with proteins L14 and L19.

One of the primary rRNA binding proteins, it binds directly near the 3'-end of the 23S rRNA, where it nucleates assembly of the 50S subunit. This chain is Large ribosomal subunit protein uL3, found in Geobacillus thermodenitrificans (strain NG80-2).